A 182-amino-acid chain; its full sequence is UPF0397 protein BcerKBAB4_2500 (182 aa).

5 consecutive transmembrane segments (helical) span residues 9-29, 40-60, 71-91, 114-134, and 142-162; these read VVAIGIGAALYGVLGLWGFSI, AILTVFGALFGPVAGLLIGLI, WGIWWGWVISSGIIGLAMGLI, IAGLIGIVIAIIFAGSFDIIV, and IVIQVLGATIADVIVFLVLGL.

It belongs to the UPF0397 family.

It is found in the cell membrane. This chain is UPF0397 protein BcerKBAB4_2500, found in Bacillus mycoides (strain KBAB4) (Bacillus weihenstephanensis).